The chain runs to 595 residues: P2X purinoceptor 7 (595 aa).

The Cytoplasmic portion of the chain corresponds to 1–22 (MPACCSCSDVFQYETNKVTRIQ). Residue Cys4 is the site of S-palmitoyl cysteine attachment. Residues 23 to 46 (SMNYGTIKWFFHVIIFSYVCFALV) form a helical membrane-spanning segment. At 47–328 (SDKLYQRKEP…ILVFGTGGKF (282 aa)) the chain is on the extracellular side. 3 disulfides stabilise this stretch: Cys119–Cys168, Cys129–Cys152, and Cys135–Cys162. ADP-ribosylarginine is present on residues Arg125 and Arg133. N-linked (GlcNAc...) asparagine glycosylation is present at Asn187. Thr189 is a binding site for ATP. Asn202 and Asn213 each carry an N-linked (GlcNAc...) asparagine glycan. Cysteines 216 and 226 form a disulfide. A glycan (N-linked (GlcNAc...) asparagine) is linked at Asn241. An intrachain disulfide couples Cys260 to Cys269. A glycan (N-linked (GlcNAc...) asparagine) is linked at Asn284. Residues Arg294 and Lys311 each contribute to the ATP site. Residues 329–353 (DIIQLVVYIGSTLSYFGLAAVFIDF) traverse the membrane as a helical segment. A Na(+)-binding site is contributed by Ser342. Phosphotyrosine is present on Tyr343. Residues 354-595 (LIDTYSSNCC…GQYSGFKSPY (242 aa)) lie on the Cytoplasmic side of the membrane. Residues 360-377 (SNCCRSHIYPWCKCCQPC) form a C-cys anchor region. S-palmitoyl cysteine attachment occurs at residues Cys362, Cys363, Cys374, and Cys377. Position 390 is a phosphoserine (Ser390). Residues 395-595 (KPTLKYVSFV…GQYSGFKSPY (201 aa)) are cytoplasmic ballast. Positions 479, 499, and 506 each coordinate Zn(2+). Arg546, His547, Tyr550, and Ala567 together coordinate GTP. Cys572 is a binding site for Zn(2+). 3 residues coordinate GTP: Lys583, Ser589, and Gly590.

This sequence belongs to the P2X receptor family. As to quaternary structure, homotrimers. Interacts with LAMA3, ITGB2, ACTB, ACTN4, SVIL, MPP3, HSPA1, HSPCB, HSPA8, PIK230 and PTPRB. Interacts (via C-terminus) with EMP2. Interacts with isoform B; this interaction potentiates P2RX7 responses. Post-translationally, phosphorylation results in its inactivation. ADP-ribosylation at Arg-125 is necessary and sufficient to activate P2RX7 and gate the channel. In terms of processing, palmitoylation of several cysteines in the C-terminal cytoplasmic tail is required for efficient localization to cell surface. Palmitoylation prevents channel desensitization by physically anchoring the palmitoylated groups to the membrane. As to expression, widely expressed with highest levels in brain and immune tissues. In terms of tissue distribution, predominant form in many tissues.

Its subcellular location is the cell membrane. The enzyme catalyses Ca(2+)(in) = Ca(2+)(out). The catalysed reaction is K(+)(in) = K(+)(out). It carries out the reaction Na(+)(in) = Na(+)(out). With respect to regulation, activated by high extracellular ATP levels (0.1-2.5 mM). The synthetic analog 2'(3')-O-(4-benzoylbenzoyl)ATP (BzATP) acts as a potent agonist. Does not undergo desensitization, instead, undergoes a facilitation process where currents progressively increase with repetitive or prolonged agonist application. Palmitoylation prevents channel desensitization. The permeability of the P2RX7 channel is modulated by the amount of cholesterol in the plasma membrane. Its function is as follows. ATP-gated nonselective transmembrane cation channel that requires high millimolar concentrations of ATP for activation. Upon ATP binding, it rapidly opens to allow the influx of small cations Na(+) and Ca(2+), and the K(+) efflux. Also has the ability to form a large pore in the cell membrane, allowing the passage of large cationic molecules. In microglia, may mediate NADPH transport across the plasma membrane. In immune cells, P2RX7 acts as a molecular sensor in pathological inflammatory states by detecting and responding to high local concentrations of extracellar ATP. In microglial cells, P2RX7 activation leads to the release of pro-inflammatory cytokines, such as IL-1beta and IL-18, through the activation of the NLRP3 inflammasome and caspase-1. Cooperates with KCNK6 to activate NLRP3 inflammasome. Activates death pathways leading to apoptosis and autophagy. Activates death pathways leading to pyroptosis. Functionally, shows ion channel activity but no macropore function. In terms of biological role, non-functional channel. The chain is P2X purinoceptor 7 (P2RX7) from Homo sapiens (Human).